A 37-amino-acid chain; its full sequence is Large ribosomal subunit protein bL36 (37 aa).

It belongs to the bacterial ribosomal protein bL36 family.

The chain is Large ribosomal subunit protein bL36 from Ureaplasma urealyticum serovar 10 (strain ATCC 33699 / Western).